Reading from the N-terminus, the 200-residue chain is MKYSVMQLKDFKIKSMDASVRASIREELLSEGFNLSEIELLIHCITNKPDDHSWLNEIIKSRLVPNDKPLWRGVPAETKQVLNQGIDIITFDKVVSASYDKNIALHFASGLEYNTQVIFEFKAPMVFNFQEYAIKALRCKEYNPNFKFPDSHRYRNMELVSDEQEVMIPAGSVFRIADRYEYKKCSTYTIYTLDFEGFNL.

Arginine 72 provides a ligand contact to NAD(+). The active site involves glutamate 165.

Belongs to the Tevenvirinae NAD--protein ADP-ribosyltransferase modA family.

Its subcellular location is the virion. The catalysed reaction is L-arginyl-[protein] + NAD(+) = N(omega)-(ADP-D-ribosyl)-L-arginyl-[protein] + nicotinamide + H(+). Its function is as follows. ADP-ribosyltransferase that efficiently ADP-ribosylates both alpha subunits of host RNA polymerase RPOA. The ModA-induced ADP-ribosylation of RPOA alpha subunits inhibits transcription from viral early promoters. This chain is NAD--protein ADP-ribosyltransferase modA, found in Enterobacteria phage T4 (Bacteriophage T4).